We begin with the raw amino-acid sequence, 250 residues long: Sugar fermentation stimulation protein homolog (250 aa).

The protein belongs to the SfsA family.

This Trichodesmium erythraeum (strain IMS101) protein is Sugar fermentation stimulation protein homolog.